The chain runs to 236 residues: uncharacterized protein (236 aa).

A run of 7 helical transmembrane segments spans residues 32 to 52 (MALA…VEPI), 61 to 81 (FGTI…MGFG), 90 to 110 (ILFW…ALIY), 115 to 135 (IART…YGYS), 144 to 164 (GSFF…NLFL), 167 to 187 (SSLS…LIAW), and 208 to 228 (LSIM…LYLM).

The protein belongs to the BI1 family.

It localises to the cell membrane. This is an uncharacterized protein from Rickettsia prowazekii (strain Madrid E).